A 224-amino-acid chain; its full sequence is GrpE protein homolog 2, mitochondrial (224 aa).

Residues 1 to 31 constitute a mitochondrion transit peptide; the sequence is MAARLLWAVRRRMQPLAAHAASEGRGWLHPF. Lysine 141 bears the N6-acetyllysine mark.

It belongs to the GrpE family. Probable component of the PAM complex at least composed of a mitochondrial HSP70 protein, GRPEL1 or GRPEL2, TIMM44, TIMM16/PAM16 and TIMM14/DNAJC19.

The protein localises to the mitochondrion matrix. Functionally, essential component of the PAM complex, a complex required for the translocation of transit peptide-containing proteins from the inner membrane into the mitochondrial matrix in an ATP-dependent manner. Seems to control the nucleotide-dependent binding of mitochondrial HSP70 to substrate proteins. Stimulates ATPase activity of mt-HSP70. May also serve to modulate the interconversion of oligomeric (inactive) and monomeric (active) forms of mt-HSP70. This is GrpE protein homolog 2, mitochondrial (GRPEL2) from Bos taurus (Bovine).